A 1053-amino-acid chain; its full sequence is DNA-directed RNA polymerase subunit beta' (1053 aa).

Positions 60, 62, 75, and 78 each coordinate Zn(2+). 3 residues coordinate Mg(2+): aspartate 449, aspartate 451, and aspartate 453. Positions 818, 892, 899, and 902 each coordinate Zn(2+).

Belongs to the RNA polymerase beta' chain family. In terms of assembly, the RNAP catalytic core consists of 2 alpha, 1 beta, 1 beta' and 1 omega subunit. When a sigma factor is associated with the core the holoenzyme is formed, which can initiate transcription. The cofactor is Mg(2+). It depends on Zn(2+) as a cofactor.

The enzyme catalyses RNA(n) + a ribonucleoside 5'-triphosphate = RNA(n+1) + diphosphate. Its function is as follows. DNA-dependent RNA polymerase catalyzes the transcription of DNA into RNA using the four ribonucleoside triphosphates as substrates. The sequence is that of DNA-directed RNA polymerase subunit beta' from Listeria grayi (Listeria murrayi).